A 1026-amino-acid chain; its full sequence is Multidrug resistance protein MdtC (1026 aa).

The next 10 membrane-spanning stretches (helical) occupy residues 12–34 (VATL…LLPV), 336–353 (QSLI…FLFL), 360–382 (AIPA…LCGF), 431–450 (VGFT…LPLL), 463–485 (FAVT…TPML), 525–547 (HARW…YISI), 853–875 (LLLI…ESYV), 895–917 (LEWF…IGIV), 948–970 (LLRF…PLVL), and 985–1007 (TIVG…VYLF).

The protein belongs to the resistance-nodulation-cell division (RND) (TC 2.A.6) family. MdtC subfamily. In terms of assembly, part of a tripartite efflux system composed of MdtA, MdtB and MdtC. MdtC forms a heteromultimer with MdtB.

It is found in the cell inner membrane. The polypeptide is Multidrug resistance protein MdtC (Pectobacterium atrosepticum (strain SCRI 1043 / ATCC BAA-672) (Erwinia carotovora subsp. atroseptica)).